The sequence spans 629 residues: 1-deoxy-D-xylulose-5-phosphate synthase (629 aa).

Thiamine diphosphate-binding positions include His73 and 114–116 (GHA). Mg(2+) is bound at residue Asp145. Thiamine diphosphate contacts are provided by residues 146–147 (GA), Asn174, Tyr284, and Glu360. Asn174 serves as a coordination point for Mg(2+).

Belongs to the transketolase family. DXPS subfamily. As to quaternary structure, homodimer. Mg(2+) is required as a cofactor. Requires thiamine diphosphate as cofactor.

The catalysed reaction is D-glyceraldehyde 3-phosphate + pyruvate + H(+) = 1-deoxy-D-xylulose 5-phosphate + CO2. It functions in the pathway metabolic intermediate biosynthesis; 1-deoxy-D-xylulose 5-phosphate biosynthesis; 1-deoxy-D-xylulose 5-phosphate from D-glyceraldehyde 3-phosphate and pyruvate: step 1/1. Catalyzes the acyloin condensation reaction between C atoms 2 and 3 of pyruvate and glyceraldehyde 3-phosphate to yield 1-deoxy-D-xylulose-5-phosphate (DXP). In Thermomicrobium roseum (strain ATCC 27502 / DSM 5159 / P-2), this protein is 1-deoxy-D-xylulose-5-phosphate synthase.